A 1409-amino-acid chain; its full sequence is MWSLTASEGESTTAHFFLGAGDEGLGTRGIGMRPEESDSELLEDEEDEVPPEPQIIVGICAMTKKSKSKPMTQILERLCRFDYLTVIILGEDVILNEPVENWPSCHCLISFHSKGFPLDKAVAYSKLRNPFLINDLAMQYYIQDRREVYRILQEEGIDLPRYAVLNRDPARPEECNLIEGEDQVEVNGAVFPKPFVEKPVSAEDHNVYIYYPSSAGGGSQRLFRKIGSRSSVYSPESIVRKTGSYIYEEFMPTDGTDVKVYAVGPDYAHAEARKSPALDGKVERDSEGKEIRYPVMLTAMEKLVARKVCVAFRQTVCGFDLLRANGHSFVCDVNGFSFVKNSMKYYDDCAKILGNTIMRELAPQFQIPWSIPTEAEDIPIVPTTSGTMMELRCVIAIIRHGDRTPKQKMKMEVKHPRFFALFEKHGGYKTGKLKLKRPEQLQEVLDITRLLLAELEKEPGGEIEEKTGKLEQLKSVLEMYGHFSGINRKVQSTYYPHGVKASNEGQDPQRETLAPSLLLVLKWGGELTPAGRVQAEELGRAFRCMYPGGQGDYAGFPGCGLLRLHSTFRHDLKIYASDEGRVQMTAAAFAKGLLALEGELTPILVQMVKSANMNGLLDSDGDSLSSCQHRVKARLHHILQQDAPFGPEDYDELAPTRSTSLLNSMTVIQNPVKVCDQVFALIENLTHQIRERMQDPRSVDLQLYHSETLELMLQRWSKLERDFRQKSGRYDISKIPDIYDCVKYDVQHNGSLGLQGAAELLRLSKALADVVIPQEYGISREEKLEIAVGFCLPLLRKILLDLQRTHEDESVNKLHPLESHVHSLLSVFRYGGLLDETQDAQWQRALDYLSAISELNYMTQIVIMLYEDNTQDPLSEERFHVELHFSPGVKGVEEEGSAPAGCGFRPASSENEEMKTNEGSMENLCPGKASDEPDRALQTSPQPPEGPGLPRRSPLIRNRKAGSMEVLSETSSSRPGGYRLFSSSRPPTEMKQSGLGSQCTGLFSTTVLGGSFSAPNLQDYARSHGKKLPPASLKHRDELLFVPAVKRFSVSFAKHPTNGFEGCSMVPTIYPLETLHNALSLHQVSEFLSRVCQRHTDAQAQASAALFDSMHSSQASDNPFSPPRTLHSPPLQLQQRSEKPPWYSSGPSSTVSSAGPSSPTTVDGNSQFGFSDQPSLNSHVAEEHQGLGLLLETPGSGAQELSIEGEQELFEPNQSPQVPPVETSQPYEEVSQPCQEVPDISQPCQDISEALSQPCQEVPDISQQCQENHDNGNHTCQEVPHISQPCQKSSQLCQKVSEEVCQLCLENSEEVSQPCQGVSVEVGKLVHKFHVGVGSLVQETLVEVGSPAEEIPEEVIQPYQGFSVEVGRLAQEASAINLLSQGIPEIDKPSQEFPEEIDLQAQEVPEEIN.

64–65 (KK) lines the substrate pocket. ATP is bound by residues Arg-145, Lys-198, His-205, Arg-224, 248-251 (EEFM), and 257-259 (DVK). 224–225 (RK) lines the substrate pocket. Substrate is bound by residues Lys-259 and Arg-273. ATP is bound by residues Ser-275, Asp-320, and 332-334 (DVN). 337-340 (SFVK) contributes to the substrate binding site. The tract at residues 382–453 (PTTSGTMMEL…VLDITRLLLA (72 aa)) is polyphosphoinositide-binding domain. The interval 891 to 996 (GVEEEGSAPA…PTEMKQSGLG (106 aa)) is disordered. 2 positions are modified to phosphoserine: Ser-920 and Ser-963. Over residues 981–996 (FSSSRPPTEMKQSGLG) the composition is skewed to polar residues. Phosphoserine is present on residues Ser-1013 and Ser-1049. Over residues 1110–1119 (MHSSQASDNP) the composition is skewed to polar residues. The tract at residues 1110–1183 (MHSSQASDNP…PSLNSHVAEE (74 aa)) is disordered. Phosphoserine occurs at positions 1121 and 1128. Low complexity predominate over residues 1144 to 1162 (SSGPSSTVSSAGPSSPTTV). The span at 1163–1178 (DGNSQFGFSDQPSLNS) shows a compositional bias: polar residues.

It belongs to the histidine acid phosphatase family. VIP1 subfamily.

Its subcellular location is the cytoplasm. It is found in the cytosol. It localises to the cell membrane. It catalyses the reaction 1D-myo-inositol hexakisphosphate + ATP = 1-diphospho-1D-myo-inositol 2,3,4,5,6-pentakisphosphate + ADP. The catalysed reaction is 5-diphospho-1D-myo-inositol 1,2,3,4,6-pentakisphosphate + ATP + H(+) = 1,5-bis(diphospho)-1D-myo-inositol 2,3,4,6-tetrakisphosphate + ADP. Bifunctional inositol kinase that acts in concert with the IP6K kinases IP6K1, IP6K2 and IP6K3 to synthesize the diphosphate group-containing inositol pyrophosphates diphosphoinositol pentakisphosphate, PP-InsP5, and bis-diphosphoinositol tetrakisphosphate, (PP)2-InsP4. PP-InsP5 and (PP)2-InsP4, also respectively called InsP7 and InsP8, regulate a variety of cellular processes, including apoptosis, vesicle trafficking, cytoskeletal dynamics, exocytosis, insulin signaling and neutrophil activation. Phosphorylates inositol hexakisphosphate (InsP6) at position 1 to produce PP-InsP5 which is in turn phosphorylated by IP6Ks to produce (PP)2-InsP4. Alternatively, phosphorylates PP-InsP5 at position 1, produced by IP6Ks from InsP6, to produce (PP)2-InsP4. Activated when cells are exposed to hyperosmotic stress. The sequence is that of Inositol hexakisphosphate and diphosphoinositol-pentakisphosphate kinase 1 from Pongo abelii (Sumatran orangutan).